Reading from the N-terminus, the 347-residue chain is D-alanine--D-alanine ligase (347 aa).

One can recognise an ATP-grasp domain in the interval 138 to 339 (KILCSHAGIP…YSQVIETILA (202 aa)). Position 171-226 (171-226 (SDRFTFPLFVKPVDAGSSFGCTFVDFFEQLPVAIEHALQHGKSAIVEPALDAPEVF)) interacts with ATP. Positions 296, 308, and 310 each coordinate Mg(2+).

This sequence belongs to the D-alanine--D-alanine ligase family. Mg(2+) serves as cofactor. Mn(2+) is required as a cofactor.

It localises to the cytoplasm. The enzyme catalyses 2 D-alanine + ATP = D-alanyl-D-alanine + ADP + phosphate + H(+). It participates in cell wall biogenesis; peptidoglycan biosynthesis. Cell wall formation. This chain is D-alanine--D-alanine ligase, found in Tropheryma whipplei (strain Twist) (Whipple's bacillus).